Consider the following 477-residue polypeptide: Bile acid transporter (477 aa).

The next 15 membrane-spanning stretches (helical) occupy residues 13-33 (FVPF…TAVL), 50-70 (WISL…GKLG), 83-103 (IVIF…IFML), 107-127 (FIVG…IVTE), 139-159 (LYML…GLIM), 166-186 (VMMW…TFSI), 206-226 (LVVV…NIGW), 228-248 (STAF…LVMV), 272-292 (LILF…IVFV), 301-321 (IISS…SVII), 333-353 (VLTF…LFKA), 359-379 (IFAA…TIFM), 381-401 (VALS…YGLF), 406-426 (APFG…ANIA), and 444-464 (ISSI…GIIL).

Belongs to the major facilitator superfamily.

Its subcellular location is the cell membrane. It participates in lipid metabolism; bile acid degradation. The sequence is that of Bile acid transporter (baiG) from Clostridium scindens (strain JCM 10418 / VPI 12708).